A 182-amino-acid chain; its full sequence is MQFNIPTLLTLFRVILIPFFVVVFYLPFAWAPMVSALIFCIAAITDWFDGFLARRWNQSTRFGAFLDPVADKVLVAIAMVLVTEHYHSWWVTLPAATMIAREIIISALREWMAELGKRSSVAVSWIGKVKTTAQMVALAWLLWRPNIWVEYAGIALFFVAAVLTLWSMLQYLSAARGDLLDQ.

Residues 2 to 12 (QFNIPTLLTLF) are Cytoplasmic-facing. Residues 13–37 (RVILIPFFVVVFYLPFAWAPMVSAL) traverse the membrane as a helical segment. Over 38–60 (IFCIAAITDWFDGFLARRWNQST) the chain is Periplasmic. The helical transmembrane segment at 61–81 (RFGAFLDPVADKVLVAIAMVL) threads the bilayer. Residues 82 to 86 (VTEHY) are Cytoplasmic-facing. A helical transmembrane segment spans residues 87 to 107 (HSWWVTLPAATMIAREIIISA). The Periplasmic segment spans residues 108–145 (LREWMAELGKRSSVAVSWIGKVKTTAQMVALAWLLWRP). Residues 146-168 (NIWVEYAGIALFFVAAVLTLWSM) traverse the membrane as a helical segment. Topologically, residues 169 to 181 (LQYLSAARGDLLD) are cytoplasmic.

The protein belongs to the CDP-alcohol phosphatidyltransferase class-I family.

The protein localises to the cell inner membrane. The catalysed reaction is a CDP-1,2-diacyl-sn-glycerol + sn-glycerol 3-phosphate = a 1,2-diacyl-sn-glycero-3-phospho-(1'-sn-glycero-3'-phosphate) + CMP + H(+). It functions in the pathway phospholipid metabolism; phosphatidylglycerol biosynthesis; phosphatidylglycerol from CDP-diacylglycerol: step 1/2. In terms of biological role, catalyzes the conversion of cytidine diphosphate diacylglycerol (CDP-DG) and glycerol 3-phosphate into phosphatidylglycerol. Essential for the synthesis of anionic phospholipids, thereby playing a role in balancing the ratio of zwitterionic and anionic phospholipids, which is thought to be important for normal membrane function. In Salmonella paratyphi A (strain ATCC 9150 / SARB42), this protein is CDP-diacylglycerol--glycerol-3-phosphate 3-phosphatidyltransferase.